The sequence spans 247 residues: tRNA (guanine-N(1)-)-methyltransferase (247 aa).

Residues glycine 112 and isoleucine 132–leucine 137 contribute to the S-adenosyl-L-methionine site.

Belongs to the RNA methyltransferase TrmD family. In terms of assembly, homodimer.

It localises to the cytoplasm. It carries out the reaction guanosine(37) in tRNA + S-adenosyl-L-methionine = N(1)-methylguanosine(37) in tRNA + S-adenosyl-L-homocysteine + H(+). Its function is as follows. Specifically methylates guanosine-37 in various tRNAs. The chain is tRNA (guanine-N(1)-)-methyltransferase from Geotalea uraniireducens (strain Rf4) (Geobacter uraniireducens).